The sequence spans 126 residues: Large ribosomal subunit protein mL52 (126 aa).

The transit peptide at 1 to 28 (MLKITKICLASSATSTAQRSIALTAPRA) directs the protein to the mitochondrion.

It belongs to the mitochondrion-specific ribosomal protein mL52 family. As to quaternary structure, component of the mitochondrial ribosome large subunit (39S) which comprises a 16S rRNA and about 50 distinct proteins.

Its subcellular location is the mitochondrion. The polypeptide is Large ribosomal subunit protein mL52 (mRpL52) (Drosophila melanogaster (Fruit fly)).